The primary structure comprises 600 residues: Cationic amino acid transporter 4, vacuolar (600 aa).

The Cytoplasmic segment spans residues M1–D32. The chain crosses the membrane as a helical span at residues L33–V53. The Vacuolar portion of the chain corresponds to A54–P60. A helical transmembrane segment spans residues A61–A81. Residues E82–S92 are Cytoplasmic-facing. Residues A93 to L115 form a helical membrane-spanning segment. Residues D116–P152 lie on the Vacuolar side of the membrane. Residues G153–L173 traverse the membrane as a helical segment. The Cytoplasmic segment spans residues C174–Q184. A helical membrane pass occupies residues A185 to L205. Over A206–Y220 the chain is Vacuolar. Residues F221 to G241 traverse the membrane as a helical segment. The Cytoplasmic portion of the chain corresponds to F242 to G264. The chain crosses the membrane as a helical span at residues I265–V285. Topologically, residues P286 to A308 are vacuolar. Residues A309 to L329 traverse the membrane as a helical segment. At A330–K360 the chain is on the cytoplasmic side. The chain crosses the membrane as a helical span at residues S361–L381. A topological domain (vacuolar) is located at residue S382. A helical membrane pass occupies residues E383–L403. Over R404–K462 the chain is Cytoplasmic. A helical membrane pass occupies residues I463 to S483. At A484–R492 the chain is on the vacuolar side. A helical transmembrane segment spans residues F493 to I513. Residues D514–F528 are Cytoplasmic-facing. The helical transmembrane segment at L529–I549 threads the bilayer. Residue N550 is a topological domain, vacuolar. Residues I551–I571 form a helical membrane-spanning segment. At F572–A600 the chain is on the cytoplasmic side.

Belongs to the amino acid-polyamine-organocation (APC) superfamily. Cationic amino acid transporter (CAT) (TC 2.A.3.3) family. As to expression, expressed in roots, stems, flowers, and leaves.

It localises to the vacuole membrane. In terms of biological role, permease involved in the transport of the cationic amino acids. This is Cationic amino acid transporter 4, vacuolar (CAT4) from Arabidopsis thaliana (Mouse-ear cress).